The following is a 236-amino-acid chain: Large ribosomal subunit protein uL1 (236 aa).

It belongs to the universal ribosomal protein uL1 family. Part of the 50S ribosomal subunit.

Its function is as follows. Binds directly to 23S rRNA. The L1 stalk is quite mobile in the ribosome, and is involved in E site tRNA release. Functionally, protein L1 is also a translational repressor protein, it controls the translation of the L11 operon by binding to its mRNA. The polypeptide is Large ribosomal subunit protein uL1 (Heliobacterium modesticaldum (strain ATCC 51547 / Ice1)).